The primary structure comprises 987 residues: Mitotic checkpoint serine/threonine-protein kinase bub-1 (987 aa).

Disordered regions lie at residues 278 to 385 and 574 to 599; these read RRRH…TSKS and LAANQAVQPSVTESSKPERSDPKDSS. The segment covering 350–364 has biased composition (basic and acidic residues); it reads ERLKIMTAGRKDGNP. Over residues 368–380 the composition is skewed to low complexity; the sequence is STSISSNYSTASA. Positions 575-587 are enriched in polar residues; sequence AANQAVQPSVTES. Residues 588–599 are compositionally biased toward basic and acidic residues; sequence SKPERSDPKDSS. A Protein kinase domain is found at 690–987; the sequence is LHIQTLIGQG…EACDLAANQK (298 aa). Residues 696 to 704 and lysine 718 contribute to the ATP site; that span reads IGQGGYAKV. Aspartate 814 serves as the catalytic Proton acceptor.

The protein belongs to the protein kinase superfamily. Ser/Thr protein kinase family. BUB1 subfamily. In terms of assembly, interacts (via kinase domain) with mdf-1 (via coiled coil domain); the interaction recruits mdf-1 to unattached kinetochores during mitosis and between homologous chromosomes in early anaphase of meiosis I. May interact with bub-3; for localization at the kinetochore and the onset of anaphase.

The protein resides in the cytoplasm. Its subcellular location is the cell cortex. The protein localises to the nucleus. It is found in the chromosome. It localises to the centromere. The protein resides in the kinetochore. The catalysed reaction is L-seryl-[protein] + ATP = O-phospho-L-seryl-[protein] + ADP + H(+). It carries out the reaction L-threonyl-[protein] + ATP = O-phospho-L-threonyl-[protein] + ADP + H(+). Serine/threonine-protein kinase essential for spindle-assembly checkpoint signaling. Plays a key role in the recruitment of the checkpoint proteins bub-3, mdf-1 and mdf-2 to unattached kinetochores. mdf-1 recruitment is independent of bub-1 kinase activity. Has a role in the correct kinetochore localization of the spindly-like protein spdl-1. In addition, during meiotic anaphase I, controls the recruitment of hcp-1/2 and klp-19 to the ring-shaped domain formed between chromosomes. Involved in chromosome alignment, chromosome homolog segregation and spindle assembly. In association with bub-3 at the kinetochore region of chromosomes, promotes the onset on anaphase independently from spindle checkpoint signaling and promotes the formation of stable end-on bipolar attachments of chromosomes. Plays a role in nuclear envelope breakdown. Required maternally during embryogenesis and in the zygote for the postembryonic development of several tissues including ventral cord neurons, gonad, intestine and seam cells. The chain is Mitotic checkpoint serine/threonine-protein kinase bub-1 from Caenorhabditis elegans.